The primary structure comprises 1575 residues: Ras GTPase-activating-like protein IQGAP2 (1575 aa).

Ser-16 is modified (phosphoserine). Residues Leu-41–Leu-156 form the Calponin-homology (CH) domain. Thr-356 carries the phosphothreonine modification. A WW domain is found at Val-594–Ser-627. Residues Ser-595, Ser-599, and Ser-685 each carry the phosphoserine modification. IQ domains are found at residues Gln-690 to Asp-719, Asn-720 to Asp-749, and His-750 to Pro-779. Thr-716 carries the phosphothreonine modification. 4 positions are modified to phosphothreonine: Thr-782, Thr-881, Thr-1002, and Thr-1269. In terms of domain architecture, Ras-GAP spans Tyr-933–Ala-1182. A phosphoserine mark is found at Ser-1271, Ser-1279, Ser-1358, and Ser-1461.

Isoform 2 expression is enhanced in testis.

In terms of biological role, binds to activated CDC42 and RAC1 but does not seem to stimulate their GTPase activity. Associates with calmodulin. The polypeptide is Ras GTPase-activating-like protein IQGAP2 (IQGAP2) (Homo sapiens (Human)).